A 317-amino-acid chain; its full sequence is tRNA dimethylallyltransferase (317 aa).

Residue 13-20 (GPTASGKS) participates in ATP binding. 15 to 20 (TASGKS) is a binding site for substrate.

This sequence belongs to the IPP transferase family. As to quaternary structure, monomer. Requires Mg(2+) as cofactor.

The enzyme catalyses adenosine(37) in tRNA + dimethylallyl diphosphate = N(6)-dimethylallyladenosine(37) in tRNA + diphosphate. Its function is as follows. Catalyzes the transfer of a dimethylallyl group onto the adenine at position 37 in tRNAs that read codons beginning with uridine, leading to the formation of N6-(dimethylallyl)adenosine (i(6)A). This Kineococcus radiotolerans (strain ATCC BAA-149 / DSM 14245 / SRS30216) protein is tRNA dimethylallyltransferase.